Reading from the N-terminus, the 517-residue chain is Tyrosine-protein kinase Fgr (517 aa).

Gly-2 carries the N-myristoyl glycine lipid modification. Residues Cys-3 and Cys-6 are each lipidated (S-palmitoyl cysteine). Ser-13 carries the post-translational modification Phosphoserine. At Tyr-32 the chain carries Phosphotyrosine. Ser-50 is modified (phosphoserine). Residues 65–126 (TGVTIFVALY…PSNYVAPVDS (62 aa)) enclose the SH3 domain. Residues 102–103 (WW) form an interaction with CLNK region. One can recognise an SH2 domain in the interval 132 to 229 (WYFGKISRKD…GLCYLLTAPC (98 aa)). A Phosphotyrosine modification is found at Tyr-196. Residue Ser-206 is modified to Phosphoserine. The Protein kinase domain maps to 251-504 (IALERRLGTG…YLQSFLEDYF (254 aa)). Residues 257 to 265 (LGTGCFGDV) and Lys-279 each bind ATP. Catalysis depends on Asp-370, which acts as the Proton acceptor. Tyr-400 carries the phosphotyrosine modification. A Phosphotyrosine; by SRC modification is found at Tyr-511.

Belongs to the protein kinase superfamily. Tyr protein kinase family. SRC subfamily. As to quaternary structure, interacts with ITGB1, ITGB2, MS4A2/FCER1B, FCER1G and FCGR2. Interacts (via SH2 domain) with SYK (tyrosine phosphorylated). Interacts (via SH2 domain) with FLT3 (tyrosine phosphorylated). Interacts with PTK2/FAK1. Interacts (via SH2 domain) with HCLS1 (tyrosine phosphorylated by SYK). Interacts with SIRPA and PTPNS1. Interacts (not phosphorylated on tyrosine residues) with CBL; FGR tyrosine phosphorylation promotes dissociation. Interacts with CLNK. Ubiquitinated. Becomes ubiquitinated in response to ITGB2 signaling; this does not lead to degradation. Post-translationally, phosphorylated. Autophosphorylated on tyrosine residues. Becomes phosphorylated in response to FCGR2 engagement, cell adhesion and signaling by ITGB2. Prior phosphorylation at Tyr-511 by SRC inhibits ulterior autophosphorylation at Tyr-400. Expressed in natural killer cells (at protein level).

The protein localises to the cell membrane. It is found in the cell projection. Its subcellular location is the ruffle membrane. The protein resides in the cytoplasm. It localises to the cytosol. The protein localises to the cytoskeleton. It is found in the mitochondrion inner membrane. Its subcellular location is the mitochondrion intermembrane space. It carries out the reaction L-tyrosyl-[protein] + ATP = O-phospho-L-tyrosyl-[protein] + ADP + H(+). With respect to regulation, activated by autophosphorylation. Prior phosphorylation at Tyr-511 by SRC inhibits ulterior autophosphorylation at Tyr-400. Activated by phorbol myristate acetate, phosphatidic acid and poly-Lys. Binding (via SH2 domain) of HCLS1 that is already phosphorylated by SYK strongly increases kinase activity. Non-receptor tyrosine-protein kinase that transmits signals from cell surface receptors devoid of kinase activity and contributes to the regulation of immune responses, including neutrophil, monocyte, macrophage and mast cell functions, cytoskeleton remodeling in response to extracellular stimuli, phagocytosis, cell adhesion and migration. Promotes mast cell degranulation, release of inflammatory cytokines and IgE-mediated anaphylaxis. Acts downstream of receptors that bind the Fc region of immunoglobulins, such as MS4A2/FCER1B, FCER1G and FCGR2. Acts downstream of ITGB1 and ITGB2, and regulates actin cytoskeleton reorganization, cell spreading and adhesion. Depending on the context, activates or inhibits cellular responses. Functions as a negative regulator of ITGB2 signaling, phagocytosis and SYK activity in monocytes. Required for normal ITGB1 and ITGB2 signaling, normal cell spreading and adhesion in neutrophils and macrophages. Functions as a positive regulator of cell migration and regulates cytoskeleton reorganization via RAC1 activation. Phosphorylates SYK (in vitro) and promotes SYK-dependent activation of AKT1 and MAP kinase signaling. Phosphorylates PLD2 in antigen-stimulated mast cells, leading to PLD2 activation and the production of the signaling molecules lysophosphatidic acid and diacylglycerol. Promotes activation of PIK3R1. Phosphorylates FASLG, and thereby regulates its ubiquitination and subsequent internalization. Phosphorylates ABL1. Promotes phosphorylation of CBL, CTTN, PIK3R1, PTK2/FAK1, PTK2B/PYK2 and VAV2. Phosphorylates HCLS1 that has already been phosphorylated by SYK, but not unphosphorylated HCLS1. Together with CLNK, it acts as a negative regulator of natural killer cell-activating receptors and inhibits interferon-gamma production. In Mus musculus (Mouse), this protein is Tyrosine-protein kinase Fgr (Fgr).